Consider the following 952-residue polypeptide: Histone deacetylase 7 (952 aa).

2 transcription repression regions span residues 1–268 and 218–546; these read MDLR…DSDR and GPNP…EHAG. The interaction with MEF2A stretch occupies residues 49–149; the sequence is SMDTPMPELQ…LPSDPPEHFP (101 aa). Ser109 is modified (phosphoserine). 2 disordered regions span residues 130–224 and 261–283; these read LSSF…PILG and PARA…ILGS. Ser155 bears the Phosphoserine; by MARK2, MARK3 and PKD/PRKD1 mark. Basic and acidic residues predominate over residues 167 to 181; it reads KSLERRKNPLLRKES. Position 181 is a phosphoserine; by PKD/PRKD2 (Ser181). The span at 197 to 212 shows a compositional bias: low complexity; that stretch reads SSPSSSSTPASGCSSP. Ser283 carries the phosphoserine modification. Thr286 carries the post-translational modification Phosphothreonine. Disordered regions lie at residues 349–377, 389–441, and 460–510; these read LHWP…MQPR, KRSA…GPAP, and LPRG…SSSE. Position 358 is a phosphoserine; by PKD/PRKD1 (Ser358). Over residues 360–374 the composition is skewed to pro residues; it reads PLPPSATAPPPPGPM. Residues Ser364, Ser405, Ser486, Ser487, and Ser507 each carry the phosphoserine modification. Residues 482–503 are compositionally biased toward low complexity; the sequence is SRAQSSPAAPASLSAPEPASQA. The segment at 512-865 is histone deacetylase; the sequence is PARTLPFTTG…VAALLGNRVD (354 aa). Residues Cys533, Cys535, and His541 each contribute to the Zn(2+) site. A Phosphoserine modification is found at Ser595. Zn(2+) is bound at residue Cys618. His670 is an active-site residue. Residues 877 to 952 are interaction with SIN3A; sequence NLNAIRSLEA…LVEEEEPMNL (76 aa). The short motif at 917 to 952 is the Nuclear export signal element; it reads KEEVEAVTALASLSVGILAEDRPSEQLVEEEEPMNL.

This sequence belongs to the histone deacetylase family. HD type 2 subfamily. In terms of assembly, interacts with HDAC1, HDAC2, HDAC3, HDAC4, HDAC5, NCOR1, NCOR2, SIN3A, SIN3B, RBBP4, RBBP7, MTA1L1, SAP30 and MBD3. Interacts with KAT5 and EDNRA. Interacts with the 14-3-3 protein YWHAE, MEF2A, MEF2B and MEF2C. Interacts with ZMYND15. Interacts with KDM5B. Interacts with PML. Interacts with FOXP3. Interacts with RARA. May be phosphorylated by CaMK1. Phosphorylated by the PKC kinases PKN1 and PKN2, impairing nuclear import. Phosphorylation at Ser-155 by MARK2, MARK3 and PRKD1 promotes interaction with 14-3-3 proteins and export from the nucleus. Phosphorylation at Ser-155 is a prerequisite for phosphorylation at Ser-181.

The protein resides in the nucleus. Its subcellular location is the cytoplasm. The enzyme catalyses N(6)-acetyl-L-lysyl-[histone] + H2O = L-lysyl-[histone] + acetate. It catalyses the reaction N(6)-acetyl-L-lysyl-[protein] + H2O = L-lysyl-[protein] + acetate. Responsible for the deacetylation of lysine residues on the N-terminal part of the core histones (H2A, H2B, H3 and H4). Histone deacetylation gives a tag for epigenetic repression and plays an important role in transcriptional regulation, cell cycle progression and developmental events. Histone deacetylases act via the formation of large multiprotein complexes. Involved in muscle maturation by repressing transcription of myocyte enhancer factors such as MEF2A, MEF2B and MEF2C. During muscle differentiation, it shuttles into the cytoplasm, allowing the expression of myocyte enhancer factors. May be involved in Epstein-Barr virus (EBV) latency, possibly by repressing the viral BZLF1 gene. Positively regulates the transcriptional repressor activity of FOXP3. Serves as a corepressor of RARA, causing its deacetylation and inhibition of RARE DNA element binding. In association with RARA, plays a role in the repression of microRNA-10a and thereby in the inflammatory response. Also acetylates non-histone proteins, such as ALKBH5. The protein is Histone deacetylase 7 (HDAC7) of Homo sapiens (Human).